The chain runs to 111 residues: Protein RnfH (111 aa).

Positions 88–111 are disordered; that stretch reads RRRRVQKTRESGTREGQKWLRGGA. A compositionally biased stretch (basic and acidic residues) spans 94 to 105; it reads KTRESGTREGQK.

It belongs to the UPF0125 (RnfH) family.

The polypeptide is Protein RnfH (Cupriavidus pinatubonensis (strain JMP 134 / LMG 1197) (Cupriavidus necator (strain JMP 134))).